The chain runs to 408 residues: Bifunctional enzyme IspD/IspF (408 aa).

The 2-C-methyl-D-erythritol 4-phosphate cytidylyltransferase stretch occupies residues 1-247 (MNAPFEKDRR…GPAMTELPDI (247 aa)). Residues 248-408 (RVGNGYDVHG…TVAYPGSLGN (161 aa)) form a 2-C-methyl-D-erythritol 2,4-cyclodiphosphate synthase region. A divalent metal cation contacts are provided by D254 and H256. 4-CDP-2-C-methyl-D-erythritol 2-phosphate contacts are provided by residues 254-256 (DVH) and 280-281 (HS). H288 contributes to the a divalent metal cation binding site. 4-CDP-2-C-methyl-D-erythritol 2-phosphate is bound by residues 302 to 304 (DIG), 378 to 381 (TTNE), F385, and R388.

It in the N-terminal section; belongs to the IspD/TarI cytidylyltransferase family. IspD subfamily. This sequence in the C-terminal section; belongs to the IspF family. A divalent metal cation serves as cofactor.

It catalyses the reaction 2-C-methyl-D-erythritol 4-phosphate + CTP + H(+) = 4-CDP-2-C-methyl-D-erythritol + diphosphate. It carries out the reaction 4-CDP-2-C-methyl-D-erythritol 2-phosphate = 2-C-methyl-D-erythritol 2,4-cyclic diphosphate + CMP. It participates in isoprenoid biosynthesis; isopentenyl diphosphate biosynthesis via DXP pathway; isopentenyl diphosphate from 1-deoxy-D-xylulose 5-phosphate: step 2/6. It functions in the pathway isoprenoid biosynthesis; isopentenyl diphosphate biosynthesis via DXP pathway; isopentenyl diphosphate from 1-deoxy-D-xylulose 5-phosphate: step 4/6. Its function is as follows. Bifunctional enzyme that catalyzes the formation of 4-diphosphocytidyl-2-C-methyl-D-erythritol from CTP and 2-C-methyl-D-erythritol 4-phosphate (MEP) (IspD), and catalyzes the conversion of 4-diphosphocytidyl-2-C-methyl-D-erythritol 2-phosphate (CDP-ME2P) to 2-C-methyl-D-erythritol 2,4-cyclodiphosphate (ME-CPP) with a corresponding release of cytidine 5-monophosphate (CMP) (IspF). The sequence is that of Bifunctional enzyme IspD/IspF from Chelativorans sp. (strain BNC1).